Consider the following 260-residue polypeptide: Glutamate racemase (260 aa).

Substrate is bound by residues 14–15 (DS) and 46–47 (YG). C77 functions as the Proton donor/acceptor in the catalytic mechanism. Position 78–79 (78–79 (NT)) interacts with substrate. The Proton donor/acceptor role is filled by C188. 189–190 (TH) contacts substrate.

It belongs to the aspartate/glutamate racemases family.

It carries out the reaction L-glutamate = D-glutamate. It functions in the pathway cell wall biogenesis; peptidoglycan biosynthesis. Provides the (R)-glutamate required for cell wall biosynthesis. In Clostridium perfringens (strain ATCC 13124 / DSM 756 / JCM 1290 / NCIMB 6125 / NCTC 8237 / Type A), this protein is Glutamate racemase.